The sequence spans 157 residues: Epithelial membrane protein 1 (157 aa).

A helical transmembrane segment spans residues 1–21 (MLVLLAGIFVVHIATVIMLFV). N43 and N46 each carry an N-linked (GlcNAc...) asparagine glycan. The next 3 membrane-spanning stretches (helical) occupy residues 67–87 (FMILSIIFCVIALLVFVFQLF), 95–115 (FFLSGATTLVCWLCILVGVSI), and 134–154 (YILGWICFCFSFIIGVLYLVL).

It belongs to the PMP-22/EMP/MP20 family.

It is found in the membrane. The sequence is that of Epithelial membrane protein 1 (EMP1) from Homo sapiens (Human).